Reading from the N-terminus, the 459-residue chain is Zinc finger protein ZPR1 (459 aa).

Low complexity predominate over residues 1 to 29 (MSAGGAVEPGLPAAAAAPSAAPARDPGPG). The segment at 1-43 (MSAGGAVEPGLPAAAAAPSAAPARDPGPGHLFRPISAEDEEQQ) is disordered. C4-type zinc fingers lie at residues 51–83 (CMNC…CEHC) and 259–291 (CPEC…CENC). A disordered region spans residues 438 to 459 (NEELGLNDMKTEGYETGLPAQR).

It belongs to the ZPR1 family. In terms of assembly, component of an import snRNP complex composed of KPNB1, SNUPN, SMN1 and ZNF259. Interacts (via C-terminal region) with SMN1 (via C-terminal region); the interaction occurs after treatment with serum. Interacts with elongation factor 1-alpha EEF1A1; the interaction occurs in a epidermal growth factor (EGF)-dependent manner. Interacts (via zinc fingers) with EGFR (via C-terminal cytoplasmic kinase domain); the interaction is negatively regulated in response to epidermal growth factor (EGF) stimulation and EGFR kinase activity. May also bind to the PDGFR receptor.

It is found in the nucleus. The protein localises to the cytoplasm. It localises to the nucleolus. Its subcellular location is the perinuclear region. The protein resides in the gem. It is found in the cajal body. The protein localises to the cell projection. It localises to the axon. Its subcellular location is the growth cone. In terms of biological role, acts as a signaling molecule that communicates proliferative growth signals from the cytoplasm to the nucleus. Plays a role for the localization and accumulation of the survival motor neuron protein SMN1 in sub-nuclear bodies, including gems and Cajal bodies. Induces neuron differentiation and stimulates axonal growth and formation of growth cone in spinal cord motor neurons. Plays a role in the splicing of cellular pre-mRNAs. May be involved in H(2)O(2)-induced neuronal cell death. The chain is Zinc finger protein ZPR1 (ZNF259) from Bos taurus (Bovine).